Consider the following 1180-residue polypeptide: DNA-directed RNA polymerase subunit beta (1180 aa).

Acidic residues predominate over residues 1154 to 1164; sequence EMKELDDEDEQ. The disordered stretch occupies residues 1154 to 1180; it reads EMKELDDEDEQASDKLNLNIDSTESNV. Residues 1167-1180 show a composition bias toward polar residues; sequence DKLNLNIDSTESNV.

This sequence belongs to the RNA polymerase beta chain family. As to quaternary structure, the RNAP catalytic core consists of 2 alpha, 1 beta, 1 beta' and 1 omega subunit. When a sigma factor is associated with the core the holoenzyme is formed, which can initiate transcription.

It catalyses the reaction RNA(n) + a ribonucleoside 5'-triphosphate = RNA(n+1) + diphosphate. DNA-dependent RNA polymerase catalyzes the transcription of DNA into RNA using the four ribonucleoside triphosphates as substrates. The chain is DNA-directed RNA polymerase subunit beta from Halalkalibacterium halodurans (strain ATCC BAA-125 / DSM 18197 / FERM 7344 / JCM 9153 / C-125) (Bacillus halodurans).